The chain runs to 220 residues: Catechol O-methyltransferase (220 aa).

Residues Val44, Glu66, Gly68–Thr69, Ser74, Glu92, and Ala121 each bind S-adenosyl-L-methionine. Asp139 is a binding site for a divalent metal cation. Asp141 provides a ligand contact to S-adenosyl-L-methionine. 2 residues coordinate a divalent metal cation: Asp165 and Asn166.

The protein belongs to the class I-like SAM-binding methyltransferase superfamily. Cation-dependent O-methyltransferase family. As to quaternary structure, homodimer. It depends on a divalent metal cation as a cofactor.

It carries out the reaction a catechol + S-adenosyl-L-methionine = a guaiacol + S-adenosyl-L-homocysteine + H(+). With respect to regulation, inhibited by EDTA. Functionally, catechol O-methyltransferase that can use various catechol-like compounds such as gallic acid (GA), 3,4-dihydroxy-5-methoxy-benzoic acid (5OMeBA), protocatechuic acid (PCA), 3,4-dihydroxy-benzaldehyde (DHA), dopamine, caffeic acid (CA), luteolin, quercetin, and 5-hydroxyuridine. The polypeptide is Catechol O-methyltransferase (Mycobacterium tuberculosis (strain ATCC 25618 / H37Rv)).